The chain runs to 573 residues: Putative cytochrome c oxidase subunit 1-beta (573 aa).

The helical transmembrane segment at 53 to 73 (VIGHLYLATSFGFFLLGGVLA) threads the bilayer. His100 contributes to the Fe(II)-heme a binding site. The next 6 helical transmembrane spans lie at 103–123 (IMMLLFATPLFAGFTNVIMPL), 141–161 (WMYLFGGLMVVSGFLTPGGAA), 188–208 (GLVVSGVSTTLSAVNFISTII), 227–247 (ILFTSILVLPAFPVLTAALLM), 272–292 (LFWFFGHPEVYIVALPFFGIV), and 304–324 (IFGYVSLVGATIAITFLSAVV). Residues His278 and Tyr282 each contribute to the Cu cation site. The 1'-histidyl-3'-tyrosine (His-Tyr) cross-link spans 278 to 282 (HPEVY). Cu cation is bound by residues His327 and His328. 2 consecutive transmembrane segments (helical) span residues 329–349 (MFATGAVLLPFFSLMSFLIAV) and 373–393 (MLWACGFLVTFLLGGMSGVLI). His411 contacts heme a3. The next 3 membrane-spanning stretches (helical) occupy residues 412-432 (LHYVLFGTVVFAMFAGFYFWW), 447-467 (IHFWTLFVGFQTTFLVQHWLG), and 490-510 (ISSIGAFLLGLSTLPFLYNVW). His413 provides a ligand contact to Fe(II)-heme a.

Belongs to the heme-copper respiratory oxidase family. In terms of assembly, associates with subunits II, III and IV to form cytochrome c oxidase. Requires Cu(2+) as cofactor. The cofactor is heme.

Its subcellular location is the cell membrane. The enzyme catalyses 4 Fe(II)-[cytochrome c] + O2 + 8 H(+)(in) = 4 Fe(III)-[cytochrome c] + 2 H2O + 4 H(+)(out). Its pathway is energy metabolism; oxidative phosphorylation. In terms of biological role, cytochrome c oxidase is the component of the respiratory chain that catalyzes the reduction of oxygen to water. Subunits 1-3 form the functional core of the enzyme complex. CO I is the catalytic subunit of the enzyme. Electrons originating in cytochrome c are transferred via the copper A center of subunit 2 and heme A of subunit 1 to the bimetallic center formed by heme A3 and copper B. The chain is Putative cytochrome c oxidase subunit 1-beta (ctaD2) from Streptomyces coelicolor (strain ATCC BAA-471 / A3(2) / M145).